A 425-amino-acid polypeptide reads, in one-letter code: Succinyl-diaminopimelate desuccinylase (425 aa).

His96 is a Zn(2+) binding site. The active site involves Asp98. Residue Asp129 participates in Zn(2+) binding. Glu163 functions as the Proton acceptor in the catalytic mechanism. Positions 164, 192, and 378 each coordinate Zn(2+).

Belongs to the peptidase M20A family. DapE subfamily. Homodimer. Zn(2+) is required as a cofactor. Co(2+) serves as cofactor.

It carries out the reaction N-succinyl-(2S,6S)-2,6-diaminopimelate + H2O = (2S,6S)-2,6-diaminopimelate + succinate. The protein operates within amino-acid biosynthesis; L-lysine biosynthesis via DAP pathway; LL-2,6-diaminopimelate from (S)-tetrahydrodipicolinate (succinylase route): step 3/3. Functionally, catalyzes the hydrolysis of N-succinyl-L,L-diaminopimelic acid (SDAP), forming succinate and LL-2,6-diaminopimelate (DAP), an intermediate involved in the bacterial biosynthesis of lysine and meso-diaminopimelic acid, an essential component of bacterial cell walls. This is Succinyl-diaminopimelate desuccinylase from Polaromonas sp. (strain JS666 / ATCC BAA-500).